The chain runs to 489 residues: Lysine--tRNA ligase (489 aa).

Mg(2+)-binding residues include E399 and E406.

The protein belongs to the class-II aminoacyl-tRNA synthetase family. Homodimer. Requires Mg(2+) as cofactor.

The protein localises to the cytoplasm. It carries out the reaction tRNA(Lys) + L-lysine + ATP = L-lysyl-tRNA(Lys) + AMP + diphosphate. The sequence is that of Lysine--tRNA ligase from Synechococcus sp. (strain CC9311).